Reading from the N-terminus, the 86-residue chain is Small ribosomal subunit protein bS16 (86 aa).

This sequence belongs to the bacterial ribosomal protein bS16 family.

The protein is Small ribosomal subunit protein bS16 of Thermoanaerobacter sp. (strain X514).